The chain runs to 118 residues: Small ribosomal subunit protein uS13 (118 aa).

The disordered stretch occupies residues 94 to 118 (GLPVRGQRTKTNARTRKGPRKPIKK).

It belongs to the universal ribosomal protein uS13 family. As to quaternary structure, part of the 30S ribosomal subunit. Forms a loose heterodimer with protein S19. Forms two bridges to the 50S subunit in the 70S ribosome.

Its function is as follows. Located at the top of the head of the 30S subunit, it contacts several helices of the 16S rRNA. In the 70S ribosome it contacts the 23S rRNA (bridge B1a) and protein L5 of the 50S subunit (bridge B1b), connecting the 2 subunits; these bridges are implicated in subunit movement. Contacts the tRNAs in the A and P-sites. The protein is Small ribosomal subunit protein uS13 of Tolumonas auensis (strain DSM 9187 / NBRC 110442 / TA 4).